The sequence spans 242 residues: RxLR effector protein PexRD15 (242 aa).

The first 24 residues, 1 to 24 (MMKSLYAVNLVLLLLLAFFAPAPA), serve as a signal peptide directing secretion. The RxLR-dEER signature appears at 48-66 (RLLRAHSSDKEEQKEEEER).

Belongs to the RxLR effector family.

The protein resides in the secreted. It is found in the host cell membrane. Its function is as follows. Effector that enhances P.infestans colonization of Nicotiana benthamiana leaves. This Phytophthora infestans (strain T30-4) (Potato late blight agent) protein is RxLR effector protein PexRD15.